The sequence spans 332 residues: Biotin synthase (332 aa).

The region spanning 51 to 279 (YKVQLASLLS…RSRVRLSAGR (229 aa)) is the Radical SAM core domain. Positions 66, 70, and 73 each coordinate [4Fe-4S] cluster. 4 residues coordinate [2Fe-2S] cluster: Cys-110, Cys-142, Cys-202, and Arg-274.

This sequence belongs to the radical SAM superfamily. Biotin synthase family. In terms of assembly, homodimer. [4Fe-4S] cluster is required as a cofactor. The cofactor is [2Fe-2S] cluster.

The enzyme catalyses (4R,5S)-dethiobiotin + (sulfur carrier)-SH + 2 reduced [2Fe-2S]-[ferredoxin] + 2 S-adenosyl-L-methionine = (sulfur carrier)-H + biotin + 2 5'-deoxyadenosine + 2 L-methionine + 2 oxidized [2Fe-2S]-[ferredoxin]. It participates in cofactor biosynthesis; biotin biosynthesis; biotin from 7,8-diaminononanoate: step 2/2. Functionally, catalyzes the conversion of dethiobiotin (DTB) to biotin by the insertion of a sulfur atom into dethiobiotin via a radical-based mechanism. The chain is Biotin synthase from Prochlorococcus marinus (strain SARG / CCMP1375 / SS120).